Consider the following 287-residue polypeptide: Hydroxysteroid 11-beta-dehydrogenase 1-like protein (287 aa).

The signal sequence occupies residues 1 to 15; it reads MKVLLLTGLGALFFA. NADP(+)-binding positions include 36–62, 87–88, and 114–116; these read GVSA…TAHT, DM, and NHL. Residue Ser-165 participates in substrate binding. The active-site Proton acceptor is Tyr-178. NADP(+) is bound by residues 178–182 and 211–217; these read YSAAK and GLRDRAS. N-linked (GlcNAc...) asparagine glycosylation is present at Asn-280.

This sequence belongs to the short-chain dehydrogenases/reductases (SDR) family.

It is found in the secreted. It catalyses the reaction cortisone + NADPH + H(+) = cortisol + NADP(+). Functionally, unidirectional NADP(+)-dependent cortisol dehydrogenase (in vitro). The protein is Hydroxysteroid 11-beta-dehydrogenase 1-like protein (HSD11B1L) of Bos taurus (Bovine).